Consider the following 542-residue polypeptide: Malate synthase, glyoxysomal (542 aa).

Arg-168 (proton acceptor) is an active-site residue. Asp-449 (proton donor) is an active-site residue. Positions 540–542 (SKL) match the Microbody targeting signal motif.

This sequence belongs to the malate synthase family.

It is found in the glyoxysome. The catalysed reaction is glyoxylate + acetyl-CoA + H2O = (S)-malate + CoA + H(+). The protein operates within carbohydrate metabolism; glyoxylate cycle; (S)-malate from isocitrate: step 2/2. The polypeptide is Malate synthase, glyoxysomal (acu-9) (Neurospora crassa (strain ATCC 24698 / 74-OR23-1A / CBS 708.71 / DSM 1257 / FGSC 987)).